The chain runs to 79 residues: Acyl carrier protein (79 aa).

One can recognise a Carrier domain in the interval 2–77 (SDIEARVKKI…NAVDYATKNQ (76 aa)). Residue Ser-37 is modified to O-(pantetheine 4'-phosphoryl)serine.

This sequence belongs to the acyl carrier protein (ACP) family. 4'-phosphopantetheine is transferred from CoA to a specific serine of apo-ACP by AcpS. This modification is essential for activity because fatty acids are bound in thioester linkage to the sulfhydryl of the prosthetic group.

The protein localises to the cytoplasm. It participates in lipid metabolism; fatty acid biosynthesis. Its function is as follows. Carrier of the growing fatty acid chain in fatty acid biosynthesis. The chain is Acyl carrier protein from Variovorax paradoxus (strain S110).